A 309-amino-acid chain; its full sequence is MSAAVAAPARTRLTHLQRLEAESIHIFREAVAEAENPVMLYSIGKDSSVLLHLALKAFAPGRLPFPLMHIDTTWKFREMIAFRDRRAKELGLELIVHTNQDGLAKGVGPVSHGSEVHTDVMKTQALRQALDKYKYDVAFGGARRDEEASRAKERIVSLRNGQHRWDPKRQRAEPWHLYNFKKRRGESFRVFPLSNWTELDIWLYIEQENIPIVPLYFAAERPVVERDGQLIMVDDERFPLEPGETPQQRQVRFRTLGCYPLTGAVESPAATLPEIIGETLAARTSERQGRVIDKDGAGAMERKKQEGYF.

Belongs to the PAPS reductase family. CysD subfamily. As to quaternary structure, heterodimer composed of CysD, the smaller subunit, and CysN.

The catalysed reaction is sulfate + ATP + H(+) = adenosine 5'-phosphosulfate + diphosphate. Its pathway is sulfur metabolism; hydrogen sulfide biosynthesis; sulfite from sulfate: step 1/3. Functionally, with CysN forms the ATP sulfurylase (ATPS) that catalyzes the adenylation of sulfate producing adenosine 5'-phosphosulfate (APS) and diphosphate, the first enzymatic step in sulfur assimilation pathway. APS synthesis involves the formation of a high-energy phosphoric-sulfuric acid anhydride bond driven by GTP hydrolysis by CysN coupled to ATP hydrolysis by CysD. The protein is Sulfate adenylyltransferase subunit 2 of Methylorubrum extorquens (strain CM4 / NCIMB 13688) (Methylobacterium extorquens).